A 498-amino-acid polypeptide reads, in one-letter code: Cytochrome P450 71B31 (498 aa).

A helical transmembrane segment spans residues 3 to 23 (MFLGLLFLFPLFFILFKNLLP). A heme-binding site is contributed by C441.

This sequence belongs to the cytochrome P450 family. Heme is required as a cofactor.

The protein localises to the membrane. In Arabidopsis thaliana (Mouse-ear cress), this protein is Cytochrome P450 71B31 (CYP71B31).